The following is a 186-amino-acid chain: Inner membrane-spanning protein YciB (186 aa).

5 consecutive transmembrane segments (helical) span residues 10 to 30 (IILFFAAFKVWGIYVATAVAI), 47 to 67 (VEPLQWLSLGVIVLFGGATLL), 76 to 96 (WKPTVLYWLMGGTLLVGQLVF), 121 to 141 (WGWTGFFATMGVLNLWVAYNF), and 149 to 169 (FKLFGGIGLMFAFVIAQALYL).

This sequence belongs to the YciB family.

The protein resides in the cell inner membrane. Its function is as follows. Plays a role in cell envelope biogenesis, maintenance of cell envelope integrity and membrane homeostasis. The protein is Inner membrane-spanning protein YciB of Acidovorax sp. (strain JS42).